The chain runs to 467 residues: Neutral protease 2 homolog NFIA_031120 (467 aa).

Residues 1-19 (MKITALASAILAVVHGALA) form the signal peptide. Positions 20–172 (LPARAPALDI…PASIKPLDRR (153 aa)) are excised as a propeptide. 2 disulfide bridges follow: cysteine 179-cysteine 251 and cysteine 258-cysteine 276. Histidine 300 contacts Zn(2+). Glutamate 301 is an active-site residue. 2 residues coordinate Zn(2+): histidine 304 and aspartate 315. The span at 359 to 451 (WDGNSQPGQT…TMWDGSSEPG (93 aa)) shows a compositional bias: polar residues. The interval 359–467 (WDGNSQPGQT…HTTWGNFYQA (109 aa)) is disordered.

This sequence belongs to the peptidase M35 family. Zn(2+) is required as a cofactor.

The protein resides in the secreted. The catalysed reaction is Preferential cleavage of bonds with hydrophobic residues in P1'. Also 3-Asn-|-Gln-4 and 8-Gly-|-Ser-9 bonds in insulin B chain.. In terms of biological role, secreted metalloproteinase that allows assimilation of proteinaceous substrates. Shows high activities on basic nuclear substrates such as histone and protamine. The chain is Neutral protease 2 homolog NFIA_031120 from Neosartorya fischeri (strain ATCC 1020 / DSM 3700 / CBS 544.65 / FGSC A1164 / JCM 1740 / NRRL 181 / WB 181) (Aspergillus fischerianus).